The chain runs to 137 residues: Cellular retinoic acid-binding protein 1 (137 aa).

Residues 21–31 (KALGVNAMLRK) carry the Nuclear localization signal motif. 132–134 (RIY) contacts all-trans-retinoate.

It belongs to the calycin superfamily. Fatty-acid binding protein (FABP) family.

The protein resides in the cytoplasm. Cytosolic CRABPs may regulate the access of retinoic acid to the nuclear retinoic acid receptors. In Hippocampus comes (Tiger tail seahorse), this protein is Cellular retinoic acid-binding protein 1 (crabp1).